We begin with the raw amino-acid sequence, 164 residues long: Transcription antitermination protein NusB (164 aa).

The protein belongs to the NusB family.

Its function is as follows. Involved in transcription antitermination. Required for transcription of ribosomal RNA (rRNA) genes. Binds specifically to the boxA antiterminator sequence of the ribosomal RNA (rrn) operons. The chain is Transcription antitermination protein NusB from Chlorobium limicola (strain DSM 245 / NBRC 103803 / 6330).